The chain runs to 768 residues: Vacuolar basic amino acid transporter 4 (768 aa).

Over 1–252 (MGKKDRQRKK…HDLTRRRIFS (252 aa)) the chain is Cytoplasmic. Positions 9–40 (KKLREFAKLKNRQRNLRKSVQTLKNEVQREAK) form a coiled coil. The interval 34–172 (EVQREAKVPR…ELPVSSSNSF (139 aa)) is disordered. A phosphoserine mark is found at serine 62, serine 99, and serine 106. Residues 110–121 (KPADKANEDDLK) are compositionally biased toward basic and acidic residues. Positions 132 to 159 (SALQSSITDFSDRSVSPLQSITSCNTPM) are enriched in polar residues. Phosphoserine is present on residues serine 160 and serine 192. The helical transmembrane segment at 253 to 273 (SCMCTYLFFIAMDSSIILVIA) threads the bilayer. At 274 to 282 (SKIASEFHE) the chain is on the vacuolar side. A helical transmembrane segment spans residues 283 to 305 (LWRLSLVISAYLLSNAIGQLVFL). Residues 306–311 (KLSLIS) are Cytoplasmic-facing. The chain crosses the membrane as a helical span at residues 312–331 (SVKLLLCIAQFSFILGGYLS). Residues 332–334 (WSS) lie on the Vacuolar side of the membrane. The helical transmembrane segment at 335 to 357 (AHFWTFIFARCVTGFGGGSLIAL) threads the bilayer. Topologically, residues 358–375 (KSTIMNRFSQKNDSRYSL) are cytoplasmic. The chain crosses the membrane as a helical span at residues 376-396 (SASMITFAMGVVIGPFMMNLF). Residues 397 to 406 (DSSHGSGWRN) lie on the Vacuolar side of the membrane. A helical membrane pass occupies residues 407 to 427 (AFLIPVPFCLVNASIMLADMY). The Cytoplasmic segment spans residues 428-447 (SVKSTLYGRPTPTLWKRFKN). A helical transmembrane segment spans residues 448-468 (TLLSPDLYEILTLTLFLLCFV). Topologically, residues 469–481 (QVTSLDLTGLKNN) are vacuolar. The N-linked (GlcNAc...) asparagine glycan is linked to asparagine 480. A helical membrane pass occupies residues 482–502 (TMIQALLFSVIIVCGILFFLI). At 503 to 522 (ETSDTYMNSVISMSLQGDKR) the chain is on the cytoplasmic side. Residues 523–543 (LIWTMIGISFCFAALMCIIPF) form a helical membrane-spanning segment. Over 544–562 (GTTYFIIVLNLSTLQLAER) the chain is Vacuolar. Asparagine 553 carries an N-linked (GlcNAc...) asparagine glycan. Residues 563 to 583 (LSPFFFSIVLGYFSVSYFWKS) traverse the membrane as a helical segment. The Cytoplasmic segment spans residues 584 to 587 (KGQN). Residues 588–608 (FLLKFVLSGATLLLYVALMGV) traverse the membrane as a helical segment. Over 609-617 (SLNLPVWKQ) the chain is Vacuolar. Residues 618–638 (YICLSLPFLGSSMILTLLSNL) form a helical membrane-spanning segment. Residues 639 to 653 (YHEYHEQRKSPISGS) lie on the Cytoplasmic side of the membrane. The chain crosses the membrane as a helical span at residues 654 to 674 (IVYCFGAVGGTVGISLGGYVF). Over 675–734 (HKTLIKLMHEKVMPFSKQGYLKKDLLKIIKHATESSDWVHESAPKFVFQTLIECYLQACR) the chain is Vacuolar. A helical membrane pass occupies residues 735 to 755 (NVFKLSTLFFTITVVAIFIFN). At 756–768 (RIHCRSQNCLSLS) the chain is on the cytoplasmic side.

Belongs to the major facilitator superfamily.

The protein resides in the vacuole membrane. Functionally, transporter required for vacuolar uptake of basic amino acids. The polypeptide is Vacuolar basic amino acid transporter 4 (VBA4) (Saccharomyces cerevisiae (strain ATCC 204508 / S288c) (Baker's yeast)).